A 436-amino-acid chain; its full sequence is GTPase Der (436 aa).

EngA-type G domains follow at residues 4–167 (PTIA…PNEE) and 175–351 (IKFS…QSQN). Residues 10–17 (GRPNVGKS), 57–61 (DTGGI), 119–122 (NKVD), 181–188 (GRPNVGKS), 229–233 (DTAGM), and 294–297 (NKWD) each bind GTP. The 85-residue stretch at 352-436 (TRIPSAVLND…PIHLIARKRK (85 aa)) folds into the KH-like domain.

Belongs to the TRAFAC class TrmE-Era-EngA-EngB-Septin-like GTPase superfamily. EngA (Der) GTPase family. As to quaternary structure, associates with the 50S ribosomal subunit.

Functionally, GTPase that plays an essential role in the late steps of ribosome biogenesis. The chain is GTPase Der from Streptococcus gordonii (strain Challis / ATCC 35105 / BCRC 15272 / CH1 / DL1 / V288).